Consider the following 28-residue polypeptide: Putative fruR/shl operon leader peptide (28 aa).

This Escherichia coli O6:H1 (strain CFT073 / ATCC 700928 / UPEC) protein is Putative fruR/shl operon leader peptide (fruL).